The primary structure comprises 121 residues: uncharacterized protein (121 aa).

Residues 43–86 (LKECSSHVAAFADCSKDKYISVVWECRELQQLMKNCLVEYTTSE) form the CHCH domain. 2 short sequence motifs (cx9C motif) span residues 46-56 (CSSHVAAFADC) and 68-78 (CRELQQLMKNC). Cystine bridges form between C46/C78 and C56/C68.

The protein belongs to the CMC family.

This is an uncharacterized protein from Dictyostelium discoideum (Social amoeba).